The primary structure comprises 676 residues: Electrogenic aspartate/glutamate antiporter SLC25A13, mitochondrial (676 aa).

Alanine 2 is subject to N-acetylalanine. The interval 2–295 (AAAKVALTKR…TLADIERIAP (294 aa)) is regulatory N-terminal domain. Over 2 to 332 (AAAKVALTKR…LLQLAESAYR (331 aa)) the chain is Mitochondrial intermembrane. EF-hand domains follow at residues 51–86 (SQPN…SVLC), 87–122 (APDA…TTIH), 125–157 (IPFN…FLLE), and 158–193 (IQLE…IRPH). Residues aspartate 66, threonine 68, aspartate 70, leucine 72, and glutamate 77 each coordinate Ca(2+). Positions 296-312 (LEEGMLPFNLAEAQRQQ) are linker loop domain. Residues 322 to 613 (FLLQLAESAY…LQRWFYVDFG (292 aa)) are carrier domain. Solcar repeat units lie at residues 327–419 (AESA…VRDK), 427–511 (VPLL…VKAS), and 519–607 (VSPG…LQRW). A helical membrane pass occupies residues 333–350 (FGLGSIAGAVGATAVYPI). Residues 351–393 (DLVKTRMQNQRSTGSFVGELMYKNSFDCFKKVLRYEGFFGLYR) lie on the Mitochondrial matrix side of the membrane. Residues lysine 354 and lysine 373 each carry the N6-acetyllysine modification. The chain crosses the membrane as a helical span at residues 394-413 (GLLPQLLGVAPEKAIKLTVN). At 414–436 (DFVRDKFMHKDGSVPLLAEIFAG) the chain is on the mitochondrial intermembrane side. A helical membrane pass occupies residues 437 to 450 (GCAGGSQVIFTNPL). At 451–485 (EIVKIRLQVAGEITTGPRVSALSVVRDLGFFGIYK) the chain is on the mitochondrial matrix side. Residue lysine 454 is modified to N6-methyllysine. At lysine 485 the chain carries N6-acetyllysine; alternate. Lysine 485 bears the N6-succinyllysine; alternate mark. A helical transmembrane segment spans residues 486–505 (GAKACFLRDIPFSAIYFPCY). Over 506–524 (AHVKASFANEDGQVSPGSL) the chain is Mitochondrial intermembrane. Residues 525 to 542 (LLAGAIAGMPAASLVTPA) traverse the membrane as a helical segment. The Mitochondrial matrix segment spans residues 543–581 (DVIKTRLQVAARAGQTTYSGVTDCFRKILREEGPKALWK). Lysine 581 carries the N6-succinyllysine modification. The chain crosses the membrane as a helical span at residues 582 to 601 (GAGARVFRSSPQFGVTLLTY). Over 602–676 (ELLQRWFYVD…STSKVTAVGS (75 aa)) the chain is Mitochondrial intermembrane. The C-terminal domain stretch occupies residues 614-676 (GVKPVGSELV…STSKVTAVGS (63 aa)). Position 663 is an N6-acetyllysine (lysine 663). A Phosphoserine modification is found at serine 667.

This sequence belongs to the mitochondrial carrier (TC 2.A.29) family. In terms of assembly, homodimer (via N-terminus).

The protein localises to the mitochondrion inner membrane. The catalysed reaction is L-aspartate(in) + L-glutamate(out) + H(+)(out) = L-aspartate(out) + L-glutamate(in) + H(+)(in). The enzyme catalyses 3-sulfino-L-alanine(out) + L-glutamate(in) + H(+)(in) = 3-sulfino-L-alanine(in) + L-glutamate(out) + H(+)(out). It catalyses the reaction 3-sulfino-L-alanine(out) + L-aspartate(in) = 3-sulfino-L-alanine(in) + L-aspartate(out). L-aspartate and 3-sulfino-L-alanine uptake are both inhibited by glisoxepide. In terms of biological role, mitochondrial electrogenic aspartate/glutamate antiporter that favors efflux of aspartate and entry of glutamate and proton within the mitochondria as part of the malate-aspartate shuttle. Also mediates the uptake of L-cysteinesulfinate (3-sulfino-L-alanine) by mitochondria in exchange of L-glutamate and proton. Can also exchange L-cysteinesulfinate with aspartate in their anionic form without any proton translocation. Lacks transport activity towards gamma-aminobutyric acid (GABA). The sequence is that of Electrogenic aspartate/glutamate antiporter SLC25A13, mitochondrial from Rattus norvegicus (Rat).